The following is a 304-amino-acid chain: Aspartate carbamoyltransferase catalytic subunit (304 aa).

Carbamoyl phosphate is bound by residues Arg-49 and Thr-50. Lys-77 provides a ligand contact to L-aspartate. Positions 99, 127, and 130 each coordinate carbamoyl phosphate. L-aspartate contacts are provided by Arg-160 and Arg-211. Residues Ala-252 and Pro-253 each coordinate carbamoyl phosphate.

This sequence belongs to the aspartate/ornithine carbamoyltransferase superfamily. ATCase family. In terms of assembly, heterododecamer (2C3:3R2) of six catalytic PyrB chains organized as two trimers (C3), and six regulatory PyrI chains organized as three dimers (R2).

It carries out the reaction carbamoyl phosphate + L-aspartate = N-carbamoyl-L-aspartate + phosphate + H(+). Its pathway is pyrimidine metabolism; UMP biosynthesis via de novo pathway; (S)-dihydroorotate from bicarbonate: step 2/3. Catalyzes the condensation of carbamoyl phosphate and aspartate to form carbamoyl aspartate and inorganic phosphate, the committed step in the de novo pyrimidine nucleotide biosynthesis pathway. This Bacillus cereus (strain ZK / E33L) protein is Aspartate carbamoyltransferase catalytic subunit.